A 366-amino-acid polypeptide reads, in one-letter code: Peptide chain release factor 2 (366 aa).

The residue at position 253 (glutamine 253) is an N5-methylglutamine.

This sequence belongs to the prokaryotic/mitochondrial release factor family. In terms of processing, methylated by PrmC. Methylation increases the termination efficiency of RF2.

It is found in the cytoplasm. Its function is as follows. Peptide chain release factor 2 directs the termination of translation in response to the peptide chain termination codons UGA and UAA. This Buchnera aphidicola subsp. Baizongia pistaciae (strain Bp) protein is Peptide chain release factor 2 (prfB).